A 1108-amino-acid chain; its full sequence is Isoleucine--tRNA ligase (1108 aa).

A 'HIGH' region motif is present at residues 53 to 63 (PFANGLPHYGH). Residues 654 to 658 (KLSKR) carry the 'KMSKS' region motif. Position 657 (Lys-657) interacts with ATP.

It belongs to the class-I aminoacyl-tRNA synthetase family. IleS type 2 subfamily. As to quaternary structure, monomer. It depends on Zn(2+) as a cofactor.

The protein localises to the cytoplasm. The enzyme catalyses tRNA(Ile) + L-isoleucine + ATP = L-isoleucyl-tRNA(Ile) + AMP + diphosphate. Catalyzes the attachment of isoleucine to tRNA(Ile). As IleRS can inadvertently accommodate and process structurally similar amino acids such as valine, to avoid such errors it has two additional distinct tRNA(Ile)-dependent editing activities. One activity is designated as 'pretransfer' editing and involves the hydrolysis of activated Val-AMP. The other activity is designated 'posttransfer' editing and involves deacylation of mischarged Val-tRNA(Ile). The protein is Isoleucine--tRNA ligase of Rickettsia bellii (strain RML369-C).